Consider the following 312-residue polypeptide: Formimidoylglutamase (312 aa).

Mn(2+) contacts are provided by H128, D153, H155, D157, D240, and D242.

The protein belongs to the arginase family. The cofactor is Mn(2+).

The enzyme catalyses N-formimidoyl-L-glutamate + H2O = formamide + L-glutamate. It functions in the pathway amino-acid degradation; L-histidine degradation into L-glutamate; L-glutamate from N-formimidoyl-L-glutamate (hydrolase route): step 1/1. Its function is as follows. Catalyzes the conversion of N-formimidoyl-L-glutamate to L-glutamate and formamide. The protein is Formimidoylglutamase of Enterobacter sp. (strain 638).